Here is a 512-residue protein sequence, read N- to C-terminus: Ribose import ATP-binding protein RbsA 2 (512 aa).

2 ABC transporter domains span residues 7 to 242 and 257 to 498; these read LEIR…VGRE and LGEP…SGIG. 39-46 lines the ATP pocket; it reads GENGAGKS.

Belongs to the ABC transporter superfamily. Ribose importer (TC 3.A.1.2.1) family. As to quaternary structure, the complex is composed of an ATP-binding protein (RbsA), two transmembrane proteins (RbsC) and a solute-binding protein (RbsB).

The protein localises to the cell inner membrane. The enzyme catalyses D-ribose(out) + ATP + H2O = D-ribose(in) + ADP + phosphate + H(+). Functionally, part of the ABC transporter complex RbsABC involved in ribose import. Responsible for energy coupling to the transport system. The sequence is that of Ribose import ATP-binding protein RbsA 2 from Rhizobium meliloti (strain 1021) (Ensifer meliloti).